Reading from the N-terminus, the 351-residue chain is sn-glycerol-3-phosphate import ATP-binding protein UgpC (351 aa).

The ABC transporter domain occupies Ile4–Ile235. Gly37–Ser44 serves as a coordination point for ATP.

This sequence belongs to the ABC transporter superfamily. sn-glycerol-3-phosphate importer (TC 3.A.1.1.3) family. The complex is composed of two ATP-binding proteins (UgpC), two transmembrane proteins (UgpA and UgpE) and a solute-binding protein (UgpB).

It localises to the cell inner membrane. It catalyses the reaction sn-glycerol 3-phosphate(out) + ATP + H2O = sn-glycerol 3-phosphate(in) + ADP + phosphate + H(+). In terms of biological role, part of the ABC transporter complex UgpBAEC involved in sn-glycerol-3-phosphate (G3P) import. Responsible for energy coupling to the transport system. The polypeptide is sn-glycerol-3-phosphate import ATP-binding protein UgpC (Brucella abortus biovar 1 (strain 9-941)).